The following is a 493-amino-acid chain: EGF-containing fibulin-like extracellular matrix protein 1 (493 aa).

A signal peptide spans 1–17 (MLKALFLTMLTLALVKS). One can recognise an EGF-like 1; atypical domain in the interval 26–71 (YTQCTDGYEWDPVRQQCKDIDECDIVPDACKGGMKCVNHYGGYLCL). In terms of domain architecture, EGF-like 2; calcium-binding spans 173–213 (DIDECTAGTHNCRADQVCINLRGSFACQCPPGYQKRGEQCV). 15 disulfide bridges follow: Cys177–Cys190, Cys184–Cys199, Cys201–Cys212, Cys218–Cys228, Cys224–Cys237, Cys239–Cys252, Cys258–Cys268, Cys264–Cys277, Cys279–Cys292, Cys298–Cys309, Cys305–Cys318, Cys320–Cys332, Cys338–Cys350, Cys344–Cys359, and Cys365–Cys377. One can recognise an EGF-like 3; calcium-binding domain in the interval 214–253 (DIDECTIPPYCHQRCVNTPGSFYCQCSPGFQLAANNYTCV). An N-linked (GlcNAc...) asparagine glycan is attached at Asn249. The EGF-like 4; calcium-binding domain maps to 254–293 (DINECDASNQCAQQCYNILGSFICQCNQGYELSSDRLNCE). The segment at 259–493 (DASNQCAQQC…LTIIVGPFSF (235 aa)) is mediates interaction with TIMP3. The region spanning 294 to 333 (DIDECRTSSYLCQYQCVNEPGKFSCMCPQGYQVVRSRTCQ) is the EGF-like 5; calcium-binding domain. Positions 334 to 378 (DINECETTNECREDEMCWNYHGGFRCYPRNPCQDPYILTPENRCV) constitute an EGF-like 6; calcium-binding domain.

Belongs to the fibulin family. Interacts with ECM1. Interacts with TIMP3. In the eye, associated with photoreceptor outer and inner segment regions, the nerve fiber layer, outer nuclear layer and inner and outer plexiform layers of the retina.

Its subcellular location is the secreted. The protein resides in the extracellular space. The protein localises to the extracellular matrix. Binds EGFR, the EGF receptor, inducing EGFR autophosphorylation and the activation of downstream signaling pathways. May play a role in cell adhesion and migration. May function as a negative regulator of chondrocyte differentiation. In the olfactory epithelium, it may regulate glial cell migration, differentiation and the ability of glial cells to support neuronal neurite outgrowth. In Homo sapiens (Human), this protein is EGF-containing fibulin-like extracellular matrix protein 1 (EFEMP1).